A 512-amino-acid polypeptide reads, in one-letter code: PTS system mannitol-specific EIICB component (512 aa).

Residues 1–28 are Cytoplasmic-facing; the sequence is MSQTEEKKGIGRRVQAFGSFLSSMIMPN. The PTS EIIC type-2 domain occupies 17 to 349; that stretch reads FGSFLSSMIM…MKFTREPKQD (333 aa). A helical transmembrane segment spans residues 29–50; that stretch reads IGAFIAWGFIAAIFIDNGWLPN. Topologically, residues 51–54 are extracellular; that stretch reads KDLA. The helical transmembrane segment at 55-75 threads the bilayer; sequence TLAGPMITYLIPLLIAFSGGR. Topologically, residues 76–139 are cytoplasmic; that stretch reads LIYDLRGGII…QGFEMLFNNF (64 aa). A helical membrane pass occupies residues 140-161; that stretch reads SAGILGFIMTIAGFKILAPLMK. Residues 162–170 are Extracellular-facing; it reads FIMHILSVA. A helical transmembrane segment spans residues 171–191; that stretch reads VEALVHAHLLPLVSILVEPAK. Residues 192–278 lie on the Cytoplasmic side of the membrane; the sequence is IVFLNNAINH…VLMRPLLFIA (87 aa). A helical membrane pass occupies residues 279–298; that stretch reads VILGGMTGVATYQATGFGFK. Residues 299-318 are Extracellular-facing; the sequence is SPASPGSFIVYCLNAPRGEF. The chain crosses the membrane as a helical span at residues 319-340; that stretch reads LHMLLGVFLAALVSFVVAALIM. Topologically, residues 341-512 are cytoplasmic; it reads KFTREPKQDL…LNNLKKDDQA (172 aa). The segment at 355–402 is disordered; that stretch reads AQMENTKGKKSSVASKLVSSDKNVNTEENASGNVSETSSSDDDPEALL. Over residues 365–376 the composition is skewed to low complexity; the sequence is SSVASKLVSSDK. Positions 380–392 are enriched in polar residues; that stretch reads TEENASGNVSETS. The region spanning 419 to 512 is the PTS EIIB type-2 domain; it reads NHVIFACDAG…LNNLKKDDQA (94 aa). The active-site Phosphocysteine intermediate; for EIIB activity is C425. C425 carries the phosphocysteine; by EIIA modification.

In terms of assembly, homodimer.

The protein localises to the cell membrane. It catalyses the reaction D-mannitol(out) + N(pros)-phospho-L-histidyl-[protein] = D-mannitol 1-phosphate(in) + L-histidyl-[protein]. In terms of biological role, the phosphoenolpyruvate-dependent sugar phosphotransferase system (sugar PTS), a major carbohydrate active transport system, catalyzes the phosphorylation of incoming sugar substrates concomitantly with their translocation across the cell membrane. The enzyme II CmtAB PTS system is involved in D-mannitol transport. The protein is PTS system mannitol-specific EIICB component (mtlA) of Staphylococcus aureus (strain Mu50 / ATCC 700699).